A 274-amino-acid polypeptide reads, in one-letter code: Transcriptional activator PerA (274 aa).

The HTH araC/xylS-type domain occupies 168-265; that stretch reads DRVIKVIELD…NTTPKKYNGV (98 aa). 2 DNA-binding regions (H-T-H motif) span residues 185–206 and 232–255; these read GDVS…NKEN and IDEI…KEYY.

Its function is as follows. Could help in the transcriptional activator of eaeA expression in enteropathogenic E.coli. However, it seems that it is PerC which acts as an activator. In Escherichia coli O127:H6 (strain E2348/69 / EPEC), this protein is Transcriptional activator PerA (perA).